The following is a 166-amino-acid chain: Deglycase TK1284 (166 aa).

Residues 1 to 166 (MKVLILSADG…WMREFVKLLR (166 aa)) form the PfpI endopeptidase domain. Residue His101 is part of the active site.

This sequence belongs to the peptidase C56 family. Homohexamer formed by a dimer of trimers that assemble into a hollow ring structure.

The protein resides in the cytoplasm. It carries out the reaction N(omega)-(1-hydroxy-2-oxopropyl)-L-arginyl-[protein] + H2O = lactate + L-arginyl-[protein] + H(+). The enzyme catalyses N(6)-(1-hydroxy-2-oxopropyl)-L-lysyl-[protein] + H2O = lactate + L-lysyl-[protein] + H(+). The catalysed reaction is S-(1-hydroxy-2-oxopropyl)-L-cysteinyl-[protein] + H2O = lactate + L-cysteinyl-[protein] + H(+). It catalyses the reaction N(omega)-(1-hydroxy-2-oxoethyl)-L-arginyl-[protein] + H2O = L-arginyl-[protein] + glycolate + H(+). It carries out the reaction N(6)-(1-hydroxy-2-oxoethyl)-L-lysyl-[protein] + H2O = glycolate + L-lysyl-[protein] + H(+). The enzyme catalyses S-(1-hydroxy-2-oxoethyl)-L-cysteinyl-[protein] + H2O = glycolate + L-cysteinyl-[protein] + H(+). Functionally, deglycase that catalyzes the deglycation of the Maillard adducts formed between amino groups of proteins and reactive carbonyl groups of glyoxals. Thus, functions as a protein deglycase that repairs methylglyoxal- and glyoxal-glycated proteins, and releases repaired proteins and lactate or glycolate, respectively. Deglycates cysteine, arginine and lysine residues in proteins, and thus reactivates these proteins by reversing glycation by glyoxals. Acts on early glycation intermediates (hemithioacetals and aminocarbinols), preventing the formation of advanced glycation endproducts (AGE) that cause irreversible damage. Also displays proteolytic activity. The polypeptide is Deglycase TK1284 (Thermococcus kodakarensis (strain ATCC BAA-918 / JCM 12380 / KOD1) (Pyrococcus kodakaraensis (strain KOD1))).